The sequence spans 241 residues: MTGNLSGENPAESVSTTLAARPEDIALDVAHTAVVVIDMQNAYASPGGYVDLAGFDIAGAAGVIGRIATVLESARTAGMQVVFLQNGWDPDYVEAGGPQSPNWHKSNALKTMRARPELEGKLLARGGWDYALVDGLKPQPGDIQVHKPRYSAFFHSQLDSVLRARGIRNLVFVGIATNVCVESTLRDGFHLEYFCVLLEDATHHLGPEFVQAATVYNVEKFFGWVSTVEDFCASMRAIAKP.

D38 functions as the Proton acceptor in the catalytic mechanism. K147 is a catalytic residue. The Nucleophile role is filled by C180.

This sequence belongs to the isochorismatase family. RutB subfamily.

The catalysed reaction is (Z)-3-ureidoacrylate + H2O + H(+) = (Z)-3-aminoacrylate + NH4(+) + CO2. The enzyme catalyses (Z)-3-ureidoacrylate + H2O = (Z)-3-aminoacrylate + carbamate + H(+). It carries out the reaction (Z)-2-methylureidoacrylate + H2O + H(+) = (Z)-2-methylaminoacrylate + NH4(+) + CO2. Functionally, hydrolyzes ureidoacrylate to form aminoacrylate and carbamate. The carbamate hydrolyzes spontaneously, thereby releasing one of the nitrogen atoms of the pyrimidine ring as ammonia and one of its carbon atoms as CO2. This Haliangium ochraceum (strain DSM 14365 / JCM 11303 / SMP-2) protein is Ureidoacrylate amidohydrolase RutB.